The following is a 244-amino-acid chain: Octanoyltransferase (244 aa).

The 189-residue stretch at 49-237 folds into the BPL/LPL catalytic domain; the sequence is VAPGNFLIFC…HLTALFELHI (189 aa). Substrate-binding positions include 94-101, 167-169, and 180-182; these read RGGDITYH, AMG, and GFA. Residue Cys-198 is the Acyl-thioester intermediate of the active site.

Belongs to the LipB family.

It localises to the cytoplasm. The enzyme catalyses octanoyl-[ACP] + L-lysyl-[protein] = N(6)-octanoyl-L-lysyl-[protein] + holo-[ACP] + H(+). It functions in the pathway protein modification; protein lipoylation via endogenous pathway; protein N(6)-(lipoyl)lysine from octanoyl-[acyl-carrier-protein]: step 1/2. In terms of biological role, catalyzes the transfer of endogenously produced octanoic acid from octanoyl-acyl-carrier-protein onto the lipoyl domains of lipoate-dependent enzymes. Lipoyl-ACP can also act as a substrate although octanoyl-ACP is likely to be the physiological substrate. In Cytophaga hutchinsonii (strain ATCC 33406 / DSM 1761 / CIP 103989 / NBRC 15051 / NCIMB 9469 / D465), this protein is Octanoyltransferase.